The sequence spans 214 residues: Ribosomal RNA small subunit methyltransferase G (214 aa).

S-adenosyl-L-methionine contacts are provided by residues Gly-77, Phe-82, 128–129 (VE), and Arg-143.

Belongs to the methyltransferase superfamily. RNA methyltransferase RsmG family.

It is found in the cytoplasm. The enzyme catalyses guanosine(527) in 16S rRNA + S-adenosyl-L-methionine = N(7)-methylguanosine(527) in 16S rRNA + S-adenosyl-L-homocysteine. In terms of biological role, specifically methylates the N7 position of guanine in position 527 of 16S rRNA. The polypeptide is Ribosomal RNA small subunit methyltransferase G (Nitrosomonas europaea (strain ATCC 19718 / CIP 103999 / KCTC 2705 / NBRC 14298)).